Reading from the N-terminus, the 453-residue chain is MDRRIFGLENEYGVTCTFRGQRRLSPDEVARYLFRRVVSWGRSSNVFLRNGARLYLDVGSHPEYATPECDNVTELVTHDKAGERILEGLLVDAERRLHEEGIAGDVYLFKNNTDSAGNSYGCHENYLVARHGEFSRLADILIPFLVTRQLLCGAGKVLQTPRGAVYCVSQRAEHIWEGVSSATTRSRPIINTRDEPHADAERYRRLHVIVGDSNMSETTMLLKVGATDLVLRMIEAGTVMRDLTLENPIRAIREVSHDITGRRKVRLASGREASALEVQREYYEKAVDFVERRGIRTGTVEQVLELWGRTLDAIEAEDLDRIGTEIDWVMKYKLIERYRAKHNMTMSHPRVAQIDLAYHDIHRRRGLYYLLERKGQATRICNDLKIFEGKSVPPQTTRARLRGDFIRRAQEQRRDFTVDWVHLKLNDQAQRTVLCKDPFRSVDDRVEKLIAGM.

Residue Glu9 coordinates Mg(2+). An ATP-binding site is contributed by Arg53. Tyr55 lines the Mg(2+) pocket. The Proton acceptor role is filled by Asp57. Glu63 is a Mg(2+) binding site. 2 residues coordinate ATP: Thr66 and Trp420.

The protein belongs to the Pup ligase/Pup deamidase family. Pup-conjugating enzyme subfamily.

It carries out the reaction ATP + [prokaryotic ubiquitin-like protein]-L-glutamate + [protein]-L-lysine = ADP + phosphate + N(6)-([prokaryotic ubiquitin-like protein]-gamma-L-glutamyl)-[protein]-L-lysine.. Its pathway is protein degradation; proteasomal Pup-dependent pathway. The protein operates within protein modification; protein pupylation. Its function is as follows. Catalyzes the covalent attachment of the prokaryotic ubiquitin-like protein modifier Pup to the proteasomal substrate proteins, thereby targeting them for proteasomal degradation. This tagging system is termed pupylation. The ligation reaction involves the side-chain carboxylate of the C-terminal glutamate of Pup and the side-chain amino group of a substrate lysine. The polypeptide is Pup--protein ligase (Streptomyces scabiei (strain 87.22)).